The chain runs to 460 residues: 3-isopropylmalate dehydratase large subunit (460 aa).

Positions 338, 398, and 401 each coordinate [4Fe-4S] cluster.

This sequence belongs to the aconitase/IPM isomerase family. LeuC type 1 subfamily. Heterodimer of LeuC and LeuD. [4Fe-4S] cluster serves as cofactor.

It carries out the reaction (2R,3S)-3-isopropylmalate = (2S)-2-isopropylmalate. It participates in amino-acid biosynthesis; L-leucine biosynthesis; L-leucine from 3-methyl-2-oxobutanoate: step 2/4. Functionally, catalyzes the isomerization between 2-isopropylmalate and 3-isopropylmalate, via the formation of 2-isopropylmaleate. This Streptococcus gordonii (strain Challis / ATCC 35105 / BCRC 15272 / CH1 / DL1 / V288) protein is 3-isopropylmalate dehydratase large subunit.